We begin with the raw amino-acid sequence, 469 residues long: Cysteine--tRNA ligase (469 aa).

Residue Cys-33 coordinates Zn(2+). A 'HIGH' region motif is present at residues 35-45; that stretch reads ATVQGLPHIGH. Zn(2+) contacts are provided by Cys-211, His-236, and Glu-240. A 'KMSKS' region motif is present at residues 267 to 271; sequence KMSKS. Residue Lys-270 participates in ATP binding.

This sequence belongs to the class-I aminoacyl-tRNA synthetase family. In terms of assembly, monomer. Zn(2+) is required as a cofactor.

It localises to the cytoplasm. The catalysed reaction is tRNA(Cys) + L-cysteine + ATP = L-cysteinyl-tRNA(Cys) + AMP + diphosphate. This chain is Cysteine--tRNA ligase (cysS), found in Mycobacterium bovis (strain ATCC BAA-935 / AF2122/97).